The primary structure comprises 236 residues: Osmoprotectant import permease protein OsmY (236 aa).

Helical transmembrane passes span 9-29 (VLGF…GIGL), 47-67 (LMLV…SGIL), 95-115 (VLAL…VALF), 126-146 (TYAG…GIGM), 180-200 (PLAF…GIYL), and 207-227 (ILGA…LAWF). The 182-residue stretch at 43-224 (GQRHLMLVFT…LFALILDTLL (182 aa)) folds into the ABC transmembrane type-1 domain.

It belongs to the binding-protein-dependent transport system permease family. The complex is composed of two ATP-binding proteins (OsmV), two transmembrane proteins (OsmW and OsmY) and a solute-binding protein (OsmX).

The protein resides in the cell inner membrane. Its function is as follows. Part of the OsmU ABC transporter complex, which is involved in the uptake of osmoprotectants such as choline-O-sulfate and glycine betaine. Probably responsible for the translocation of the substrate across the membrane. The polypeptide is Osmoprotectant import permease protein OsmY (osmY) (Salmonella typhimurium (strain LT2 / SGSC1412 / ATCC 700720)).